A 160-amino-acid chain; its full sequence is Ribosomal RNA large subunit methyltransferase H (160 aa).

Residues Leu-76, Gly-108, and 127–132 (LGKMTW) contribute to the S-adenosyl-L-methionine site.

The protein belongs to the RNA methyltransferase RlmH family. In terms of assembly, homodimer.

Its subcellular location is the cytoplasm. The catalysed reaction is pseudouridine(1915) in 23S rRNA + S-adenosyl-L-methionine = N(3)-methylpseudouridine(1915) in 23S rRNA + S-adenosyl-L-homocysteine + H(+). Specifically methylates the pseudouridine at position 1915 (m3Psi1915) in 23S rRNA. This Rhizobium rhizogenes (strain K84 / ATCC BAA-868) (Agrobacterium radiobacter) protein is Ribosomal RNA large subunit methyltransferase H.